The following is a 315-amino-acid chain: ATP synthase gamma chain (315 aa).

The protein belongs to the ATPase gamma chain family. F-type ATPases have 2 components, CF(1) - the catalytic core - and CF(0) - the membrane proton channel. CF(1) has five subunits: alpha(3), beta(3), gamma(1), delta(1), epsilon(1). CF(0) has three main subunits: a, b and c.

It localises to the cellular thylakoid membrane. Produces ATP from ADP in the presence of a proton gradient across the membrane. The gamma chain is believed to be important in regulating ATPase activity and the flow of protons through the CF(0) complex. This chain is ATP synthase gamma chain, found in Trichormus variabilis (strain ATCC 29413 / PCC 7937) (Anabaena variabilis).